Consider the following 469-residue polypeptide: Glutamate--tRNA ligase (469 aa).

A 'HIGH' region motif is present at residues 9–19; it reads PSPTGYLHVGG. 4 residues coordinate Zn(2+): Cys-98, Cys-100, Cys-125, and Asp-127. A 'KMSKS' region motif is present at residues 237 to 241; it reads KLSKR. Lys-240 is a binding site for ATP.

It belongs to the class-I aminoacyl-tRNA synthetase family. Glutamate--tRNA ligase type 1 subfamily. As to quaternary structure, monomer. Zn(2+) is required as a cofactor.

It is found in the cytoplasm. The enzyme catalyses tRNA(Glu) + L-glutamate + ATP = L-glutamyl-tRNA(Glu) + AMP + diphosphate. Catalyzes the attachment of glutamate to tRNA(Glu) in a two-step reaction: glutamate is first activated by ATP to form Glu-AMP and then transferred to the acceptor end of tRNA(Glu). The protein is Glutamate--tRNA ligase of Serratia proteamaculans (strain 568).